The sequence spans 546 residues: MTTNYIFVTGGVVSSLGKGIAAASLAAILEARGLKVTMMKLDPYINVDPGTMSPTQHGEVFVTEDGAETDLDLGHYERFIRTKMTKRNNFTAGRVYADVLRKERRGDYLGATIQVIPHITNAIKERVISGAEGHDIAIVEVGGTVGDIESLPFMEAIRQLAVELGRERAMFMHLTLVPYLGAAGELKTKPTQHSVKELLSIGIQPDILVCRSDRVIPANERKKIALFCNVQEKAVISMKDVDSIYKIPQLIKAQGTDDLVCQRFGITAPEADLSEWEQVIYEEANPTGDVVIGMVGKYIELPDAYKSVNEALKHAGLKNRLNVTIKYVDSQDVESKGTEILEGLDAILVPGGFGDRGVEGKILAAQYARENKVPYLGICLGMQVALIEYARNVANMEGAHSSEFSKDTKFPVVGLITEWIDSEGNVEERTEKSDLGGTMRLGSQLCHLAKGSKARELYGNATVEERHRHRYEVNNNLLPQLEKAGLKVSGLSADKKLVEIIEIPNHPWFVAAQFHPEFTSTPRDGHPLFEGFVKAAGESVRGELEK.

The interval Met1–Ile266 is amidoligase domain. A CTP-binding site is contributed by Ser14. A UTP-binding site is contributed by Ser14. ATP-binding positions include Ser15–Ile20 and Asp72. Positions 72 and 140 each coordinate Mg(2+). Residues Asp147–Glu149, Lys187–Gln192, and Lys223 each bind CTP. UTP is bound by residues Lys187–Gln192 and Lys223. Residue Lys239–Val241 coordinates ATP. The region spanning Val291 to Gly542 is the Glutamine amidotransferase type-1 domain. Gly352 is an L-glutamine binding site. Cys379 acts as the Nucleophile; for glutamine hydrolysis in catalysis. Residues Leu380–Gln383, Glu403, and Arg470 contribute to the L-glutamine site. Active-site residues include His515 and Glu517.

Belongs to the CTP synthase family. As to quaternary structure, homotetramer.

It carries out the reaction UTP + L-glutamine + ATP + H2O = CTP + L-glutamate + ADP + phosphate + 2 H(+). It catalyses the reaction L-glutamine + H2O = L-glutamate + NH4(+). The enzyme catalyses UTP + NH4(+) + ATP = CTP + ADP + phosphate + 2 H(+). It functions in the pathway pyrimidine metabolism; CTP biosynthesis via de novo pathway; CTP from UDP: step 2/2. Its activity is regulated as follows. Allosterically activated by GTP, when glutamine is the substrate; GTP has no effect on the reaction when ammonia is the substrate. The allosteric effector GTP functions by stabilizing the protein conformation that binds the tetrahedral intermediate(s) formed during glutamine hydrolysis. Inhibited by the product CTP, via allosteric rather than competitive inhibition. In terms of biological role, catalyzes the ATP-dependent amination of UTP to CTP with either L-glutamine or ammonia as the source of nitrogen. Regulates intracellular CTP levels through interactions with the four ribonucleotide triphosphates. The protein is CTP synthase of Aliivibrio fischeri (strain MJ11) (Vibrio fischeri).